We begin with the raw amino-acid sequence, 506 residues long: Lysine--tRNA ligase (506 aa).

Residues glutamate 416 and glutamate 423 each coordinate Mg(2+).

Belongs to the class-II aminoacyl-tRNA synthetase family. In terms of assembly, homodimer. It depends on Mg(2+) as a cofactor.

It is found in the cytoplasm. The catalysed reaction is tRNA(Lys) + L-lysine + ATP = L-lysyl-tRNA(Lys) + AMP + diphosphate. This Sodalis glossinidius (strain morsitans) protein is Lysine--tRNA ligase.